A 1119-amino-acid chain; its full sequence is Synaptojanin (1119 aa).

The SAC domain occupies 119–438; the sequence is LQRLLSSQMF…GDQCSTIYAG (320 aa). The tract at residues 532-826 is catalytic; that stretch reads GTWNVNGGKN…DRSELKTSDH (295 aa). 2 disordered regions span residues 986–1005 and 1042–1119; these read SLTL…ARSE and EHVP…PKNM. Residues 1050–1072 are compositionally biased toward low complexity; that stretch reads PQSNNNKSPPQACLFNPFTQSAP. 2 stretches are compositionally biased toward pro residues: residues 1073–1085 and 1093–1119; these read SPAP…PLPP and PGPP…PKNM.

The protein belongs to the synaptojanin family. It in the central section; belongs to the inositol 1,4,5-trisphosphate 5-phosphatase family.

It localises to the cytoplasmic vesicle. The protein resides in the secretory vesicle. It is found in the synaptic vesicle. The protein localises to the synapse. The catalysed reaction is a 1,2-diacyl-sn-glycero-3-phospho-(1D-myo-inositol-4,5-bisphosphate) + H2O = a 1,2-diacyl-sn-glycero-3-phospho-(1D-myo-inositol 4-phosphate) + phosphate. Functionally, probable inositol 5-phosphatase which regulates synaptic vesicle recycling in neurons by regulating clathrin-mediated endocytosis. The chain is Synaptojanin from Caenorhabditis elegans.